We begin with the raw amino-acid sequence, 396 residues long: Anhydro-N-acetylmuramic acid kinase (396 aa).

21-28 is an ATP binding site; it reads GTSADGID.

The protein belongs to the anhydro-N-acetylmuramic acid kinase family.

The catalysed reaction is 1,6-anhydro-N-acetyl-beta-muramate + ATP + H2O = N-acetyl-D-muramate 6-phosphate + ADP + H(+). It participates in amino-sugar metabolism; 1,6-anhydro-N-acetylmuramate degradation. Its pathway is cell wall biogenesis; peptidoglycan recycling. Functionally, catalyzes the specific phosphorylation of 1,6-anhydro-N-acetylmuramic acid (anhMurNAc) with the simultaneous cleavage of the 1,6-anhydro ring, generating MurNAc-6-P. Is required for the utilization of anhMurNAc either imported from the medium or derived from its own cell wall murein, and thus plays a role in cell wall recycling. The sequence is that of Anhydro-N-acetylmuramic acid kinase from Caldanaerobacter subterraneus subsp. tengcongensis (strain DSM 15242 / JCM 11007 / NBRC 100824 / MB4) (Thermoanaerobacter tengcongensis).